The following is a 227-amino-acid chain: Terpene cyclase ltmB (227 aa).

The next 7 helical transmembrane spans lie at 20-40 (LAET…VLMI), 51-71 (MALI…IIYP), 76-96 (VELA…TSAA), 113-133 (AGLI…ALAM), 135-155 (IGPA…LSIG), 173-195 (LWSS…WRYW), and 206-226 (LILW…VCLL).

This sequence belongs to the paxB family.

It localises to the membrane. It functions in the pathway secondary metabolite biosynthesis. Functionally, terpene cyclase; part of the gene cluster that mediates the biosynthesis of lolitrems, indole-diterpene mycotoxins that are potent tremorgens in mammals, and are synthesized by clavicipitaceous fungal endophytes in association with their grass hosts. The geranylgeranyl diphosphate (GGPP) synthase ltmG is proposed to catalyze the first step in lolitrem biosynthesis. LtmG catalyzes a series of iterative condensations of isopentenyl diphosphate (IPP) with dimethylallyl diphosphate (DMAPP), geranyl diphosphate (GPP), and farnesyl diphosphate (FPP), to form GGPP. GGPP then condenses with indole-3-glycerol phosphate to form 3-geranylgeranylindole, an acyclic intermediate, to be incorporated into paxilline. Either ltmG or ltmC could be responsible for this step, as both are putative prenyl transferases. The FAD-dependent monooxygenase ltmM then catalyzes the epoxidation of the two terminal alkenes of the geranylgeranyl moiety, which is subsequently cyclized by ltmB, to paspaline. The cytochrome P450 monooxygenases ltmQ and ltmP can sequentially oxidize paspaline to terpendole E and terpendole F. Alternatively, ltmP converts paspaline to an intermediate which is oxidized by ltmQ to terpendole F. LtmF, ltmK, ltmE and ltmJ appear to be unique to the epichloe endophytes. The prenyltransferase ltmF is involved in the 27-hydroxyl-O-prenylation. The cytochrome P450 monooxygenase ltmK is required for the oxidative acetal ring formation. The multi-functional prenyltransferase ltmE is required for C20- and C21-prenylations of the indole ring of paspalanes and acts together with the cytochrome P450 monooxygenase ltmJ to yield lolitremanes by multiple oxidations and ring closures. The stereoisomer pairs of lolitriol and lolitrem N or lolitrem B and lolitrem F may be attributed to variations in the way in which ring closure can occur under the action of ltmJ. While the major product of this pathway is lolitrem B, the prenyl transferases and cytochrome P450 monooxygenases identified in this pathway have a remarkable versatility in their regio- and stereo-specificities to generate a diverse range of metabolites that are products of a metabolic grid rather than a linear pathway. This Epichloe festucae var. lolii (Neotyphodium lolii) protein is Terpene cyclase ltmB.